Reading from the N-terminus, the 239-residue chain is Ribonuclease PH (239 aa).

Phosphate contacts are provided by residues Arg86 and 124 to 126 (GTR).

It belongs to the RNase PH family. Homohexameric ring arranged as a trimer of dimers.

The enzyme catalyses tRNA(n+1) + phosphate = tRNA(n) + a ribonucleoside 5'-diphosphate. Phosphorolytic 3'-5' exoribonuclease that plays an important role in tRNA 3'-end maturation. Removes nucleotide residues following the 3'-CCA terminus of tRNAs; can also add nucleotides to the ends of RNA molecules by using nucleoside diphosphates as substrates, but this may not be physiologically important. Probably plays a role in initiation of 16S rRNA degradation (leading to ribosome degradation) during starvation. This Azoarcus sp. (strain BH72) protein is Ribonuclease PH.